A 414-amino-acid polypeptide reads, in one-letter code: Methylthioribose-1-phosphate isomerase (414 aa).

Over residues 205-215 (SQSQGSENPPS) the composition is skewed to polar residues. Residues 205–224 (SQSQGSENPPSKKQKKDAAP) are disordered. Asp-283 functions as the Proton donor in the catalytic mechanism.

It belongs to the eIF-2B alpha/beta/delta subunits family. MtnA subfamily.

It localises to the cytoplasm. The protein resides in the nucleus. It catalyses the reaction 5-(methylsulfanyl)-alpha-D-ribose 1-phosphate = 5-(methylsulfanyl)-D-ribulose 1-phosphate. It functions in the pathway amino-acid biosynthesis; L-methionine biosynthesis via salvage pathway; L-methionine from S-methyl-5-thio-alpha-D-ribose 1-phosphate: step 1/6. Its function is as follows. Catalyzes the interconversion of methylthioribose-1-phosphate (MTR-1-P) into methylthioribulose-1-phosphate (MTRu-1-P). The sequence is that of Methylthioribose-1-phosphate isomerase from Zygosaccharomyces rouxii (strain ATCC 2623 / CBS 732 / NBRC 1130 / NCYC 568 / NRRL Y-229).